Here is a 240-residue protein sequence, read N- to C-terminus: Eukaryotic translation initiation factor 3 subunit J (240 aa).

Residues 19–95 form a disordered region; it reads KADVNKWAGE…FANMTPEQQL (77 aa). The segment covering 28–45 has biased composition (acidic residues); the sequence is EDEDDVKDNWEDDDEEEE. Residues 46-56 show a composition bias toward basic and acidic residues; it reads KKDAPKQEDTP. Over residues 60–71 the composition is skewed to basic residues; that stretch reads AKPKKAAQQKKL. 2 coiled-coil regions span residues 63–90 and 176–235; these read KKAAQQKKLKKEDLERLQREEEEFANMT and SNNI…DYDD. A compositionally biased stretch (basic and acidic residues) spans 72-81; sequence KKEDLERLQR.

The protein belongs to the eIF-3 subunit J family. Component of the eukaryotic translation initiation factor 3 (eIF-3) complex.

Its subcellular location is the cytoplasm. In terms of biological role, component of the eukaryotic translation initiation factor 3 (eIF-3) complex, which is involved in protein synthesis of a specialized repertoire of mRNAs and, together with other initiation factors, stimulates binding of mRNA and methionyl-tRNAi to the 40S ribosome. The eIF-3 complex specifically targets and initiates translation of a subset of mRNAs involved in cell proliferation. The chain is Eukaryotic translation initiation factor 3 subunit J from Anopheles gambiae (African malaria mosquito).